Reading from the N-terminus, the 280-residue chain is Acetyl-coenzyme A carboxylase carboxyl transferase subunit beta (280 aa).

In terms of domain architecture, CoA carboxyltransferase N-terminal spans 28 to 280 (LFLACPYCGA…IVRLHTAEAE (253 aa)). Positions 32, 35, 50, and 53 each coordinate Zn(2+). The segment at 32–53 (CPYCGAQMYNKQLGKYRVCAKC) adopts a C4-type zinc-finger fold.

It belongs to the AccD/PCCB family. In terms of assembly, acetyl-CoA carboxylase is a heterohexamer composed of biotin carboxyl carrier protein (AccB), biotin carboxylase (AccC) and two subunits each of ACCase subunit alpha (AccA) and ACCase subunit beta (AccD). It depends on Zn(2+) as a cofactor.

It localises to the cytoplasm. It carries out the reaction N(6)-carboxybiotinyl-L-lysyl-[protein] + acetyl-CoA = N(6)-biotinyl-L-lysyl-[protein] + malonyl-CoA. The protein operates within lipid metabolism; malonyl-CoA biosynthesis; malonyl-CoA from acetyl-CoA: step 1/1. Functionally, component of the acetyl coenzyme A carboxylase (ACC) complex. Biotin carboxylase (BC) catalyzes the carboxylation of biotin on its carrier protein (BCCP) and then the CO(2) group is transferred by the transcarboxylase to acetyl-CoA to form malonyl-CoA. The polypeptide is Acetyl-coenzyme A carboxylase carboxyl transferase subunit beta (Leuconostoc mesenteroides subsp. mesenteroides (strain ATCC 8293 / DSM 20343 / BCRC 11652 / CCM 1803 / JCM 6124 / NCDO 523 / NBRC 100496 / NCIMB 8023 / NCTC 12954 / NRRL B-1118 / 37Y)).